The following is a 258-amino-acid chain: Peptidase inhibitor 15 (258 aa).

Positions 1–19 (MIAISAVSSALLFSLLCEA) are cleaved as a signal peptide. Positions 20-60 (STVVLLNSTDSSPPTNNFTDIEAALKAQLDSADIPKARRKR) are excised as a propeptide. N-linked (GlcNAc...) asparagine glycosylation is found at Asn-26, Asn-36, and Asn-124. In terms of domain architecture, SCP spans 71-211 (LDYHNQVRGK…RRAVYLVCNY (141 aa)).

Belongs to the CRISP family. N-glycosylated. As to expression, weakly expressed. Expressed at low level in prostate, mammary gland, salivary gland and thyroid gland.

Its subcellular location is the secreted. Serine protease inhibitor which displays weak inhibitory activity against trypsin. May play a role in facial patterning during embryonic development. This Homo sapiens (Human) protein is Peptidase inhibitor 15 (PI15).